A 217-amino-acid polypeptide reads, in one-letter code: Neuron-specific vesicular protein calcyon (217 aa).

The tract at residues 1 to 25 (MVKLGCSFSGKPGKDPGDQDGAAMD) is disordered. Residues 1 to 87 (MVKLGCSFSG…EEGRRLPTAR (87 aa)) are Extracellular-facing. Asn-73 is a glycosylation site (N-linked (GlcNAc...) asparagine). Residues 88 to 108 (MIAFAMALLGCVLIMYKAIWY) form a helical membrane-spanning segment. Over 109 to 217 (DQFTCPDGFL…AGSAAPPPAQ (109 aa)) the chain is Cytoplasmic. Residues 162-217 (PAAWGDGYRAAKEERKGPTQAGAAAAATEPPGKPSAKAEKEAARKAAGSAAPPPAQ) form a disordered region.

Belongs to the NSG family. In terms of assembly, interacts with CLTA. Post-translationally, glycosylated. Expressed in the pyramidal cells of the prefrontal cortex, in hypothalamus and in caudate nucleus. No expression in spleen. Up-regulated in the prefrontal cortex of schizophrenic patients with nearly twice the levels of non-schizophrenics.

The protein localises to the cytoplasmic vesicle membrane. Its subcellular location is the cell membrane. Its function is as follows. Interacts with clathrin light chain A and stimulates clathrin self-assembly and clathrin-mediated endocytosis. The polypeptide is Neuron-specific vesicular protein calcyon (CALY) (Homo sapiens (Human)).